Reading from the N-terminus, the 510-residue chain is Kynurenine 3-monooxygenase (510 aa).

It belongs to the aromatic-ring hydroxylase family. KMO subfamily. Requires FAD as cofactor.

It is found in the mitochondrion outer membrane. The enzyme catalyses L-kynurenine + NADPH + O2 + H(+) = 3-hydroxy-L-kynurenine + NADP(+) + H2O. It functions in the pathway cofactor biosynthesis; NAD(+) biosynthesis; quinolinate from L-kynurenine: step 1/3. Functionally, catalyzes the hydroxylation of L-kynurenine (L-Kyn) to form 3-hydroxy-L-kynurenine (L-3OHKyn). Required for synthesis of quinolinic acid. This Aspergillus oryzae (strain ATCC 42149 / RIB 40) (Yellow koji mold) protein is Kynurenine 3-monooxygenase (bna4).